Here is a 491-residue protein sequence, read N- to C-terminus: MAVTSTAQACDLVIFGAKGDLARRKLLPSLYQLEKAGHIHPETRIIGVGRAEWDRDAYIKVVREALETFLKEPLDPALWTTLSNRLDFCNLDVEDTEGFKRLGTMLDQQNRTTINYFAMPPSTFGAICRGLGQAGLNKEPARVVMEKPLGTNLASSRVINNQVAEFFNECQVYRIDHYLGKETVLNLLALRFANSLFANNWDNRTIDHVQITVAEEVGIEGRWGYFDQAGQMRDMIQNHLLQILTMIAMSPPADLSTDRIRDEKVKVLRSLRRIDRSNVHEVTVRGQYTSGFVQGKKVPGYLEEEGANKTSNTETFVAIRVDIDDWRWSGVPFYLRTGKRLPSKCSEVVVYFKNPALNLFHDSYQQLPQNKLIIRLQPDEGVEIQILNKIPGLDHKHRLQTTKLDLSFSETFNQQHLADAYERLLLETMRGIQALFVRRDEVEEAWKWVDSIMDAWAMDNDSPKPYQAGTWGPVASVAMITRDGRSWNEVE.

NADP(+) contacts are provided by residues R50, 92-93 (DV), and K147. H177, K181, E215, and D234 together coordinate substrate. H239 functions as the Proton acceptor in the catalytic mechanism. 2 residues coordinate substrate: K339 and K344.

It belongs to the glucose-6-phosphate dehydrogenase family.

It carries out the reaction D-glucose 6-phosphate + NADP(+) = 6-phospho-D-glucono-1,5-lactone + NADPH + H(+). It participates in carbohydrate degradation; pentose phosphate pathway; D-ribulose 5-phosphate from D-glucose 6-phosphate (oxidative stage): step 1/3. Catalyzes the oxidation of glucose 6-phosphate to 6-phosphogluconolactone. This is Glucose-6-phosphate 1-dehydrogenase from Dickeya dadantii (strain 3937) (Erwinia chrysanthemi (strain 3937)).